The primary structure comprises 481 residues: MADGNTPHVAIIPSPGIGHLIPLVELAKRLLDNHGFTVTFIIPGDSPPSKAQRSVLNSLPSSIASVFLPPADLSDVPSTARIETRISLTVTRSNPALRELFGSLSAEKRLPAVLVVDLFGTDAFDVAAEFHVSPYIFYASNANVLTFLLHLPKLDETVSCEFRELTEPVIIPGCVPITGKDFVDPCQDRKDESYKWLLHNVKRFKEAEGILVNSFVDLEPNTIKIVQEPAPDKPPVYLIGPLVNSGSHDADVNDEYKCLNWLDNQPFGSVLYVSFGSGGTLTFEQFIELALGLAESGKRFLWVIRSPSGIASSSYFNPQSRNDPFSFLPQGFLDRTKEKGLVVGSWAPQAQILTHTSIGGFLTHCGWNSSLESIVNGVPLIAWPLYAEQKMNALLLVDVGAALRARLGEDGVVGREEVARVVKGLIEGEEGNAVRKKMKELKEGSVRVLRDDGFSTKSLNEVSLKWKAHQRKIDQEQESFL.

UDP-alpha-D-glucose is bound by residues S277, 347–349, 364–372, and 386–389; these read APQ, HCGWNSSLE, and YAEQ.

The protein belongs to the UDP-glycosyltransferase family.

Functionally, possesses low quercetin 3-O-glucosyltransferase activity in vitro. The sequence is that of UDP-glycosyltransferase 72B3 (UGT72B3) from Arabidopsis thaliana (Mouse-ear cress).